Reading from the N-terminus, the 439-residue chain is GTPase Der (439 aa).

2 EngA-type G domains span residues 4–168 (PIVA…KDDE) and 177–352 (INIA…DNYN). GTP is bound by residues 10 to 17 (GRPNVGKS), 57 to 61 (DTGGI), 120 to 123 (NKID), 183 to 190 (GKPNVGKS), 230 to 234 (DTAGL), and 295 to 298 (NKWD). The region spanning 353–437 (KRVKTGVLND…GIKSEFRERK (85 aa)) is the KH-like domain.

The protein belongs to the TRAFAC class TrmE-Era-EngA-EngB-Septin-like GTPase superfamily. EngA (Der) GTPase family. As to quaternary structure, associates with the 50S ribosomal subunit.

GTPase that plays an essential role in the late steps of ribosome biogenesis. This is GTPase Der from Clostridium botulinum (strain ATCC 19397 / Type A).